The sequence spans 87 residues: Phosphoribosyl-ATP pyrophosphatase (87 aa).

Belongs to the PRA-PH family.

It localises to the cytoplasm. It catalyses the reaction 1-(5-phospho-beta-D-ribosyl)-ATP + H2O = 1-(5-phospho-beta-D-ribosyl)-5'-AMP + diphosphate + H(+). It participates in amino-acid biosynthesis; L-histidine biosynthesis; L-histidine from 5-phospho-alpha-D-ribose 1-diphosphate: step 2/9. This is Phosphoribosyl-ATP pyrophosphatase from Pseudarthrobacter chlorophenolicus (strain ATCC 700700 / DSM 12829 / CIP 107037 / JCM 12360 / KCTC 9906 / NCIMB 13794 / A6) (Arthrobacter chlorophenolicus).